The primary structure comprises 66 residues: Toxin Boma6e (66 aa).

Residues 2 to 64 form the LCN-type CS-alpha/beta domain; that stretch reads RDAYIAQNYN…VPLKVQGKCH (63 aa). 3 disulfide bridges follow: Cys12-Cys63, Cys22-Cys46, and Cys26-Cys48.

Belongs to the long (3 C-C) scorpion toxin superfamily. Post-translationally, only three disulfide bridges can be formed, because only seven cysteines are present. As to expression, expressed by the venom gland.

Its subcellular location is the secreted. Its function is as follows. Binds voltage-independently at site-3 of sodium channels (Nav) and inhibits the inactivation of the activated channels, thereby blocking neuronal transmission. This chain is Toxin Boma6e, found in Buthus occitanus mardochei (Moroccan scorpion).